Here is a 190-residue protein sequence, read N- to C-terminus: MTRDEIVAIFQKTGAMLSGHFRLTSGRHSNRYFQCALVLQHPDYSELLCRELAARFAGDGISVVIGPAMGGIIVSYEVARALGVRGLFAERENGVMTLRRGFSIEPGERVLVVEDVITTGGSVREVMEAVRKSGGTVAGAGVLVDRSNGAVDLGVRTEALLTAEVVSYAPEDCPFCKQGIPAVKPGSRKI.

5-phospho-alpha-D-ribose 1-diphosphate is bound at residue Glu114 to Ser122. Orotate contacts are provided by Thr118 and Arg146.

The protein belongs to the purine/pyrimidine phosphoribosyltransferase family. PyrE subfamily. As to quaternary structure, homodimer. The cofactor is Mg(2+).

It carries out the reaction orotidine 5'-phosphate + diphosphate = orotate + 5-phospho-alpha-D-ribose 1-diphosphate. Its pathway is pyrimidine metabolism; UMP biosynthesis via de novo pathway; UMP from orotate: step 1/2. In terms of biological role, catalyzes the transfer of a ribosyl phosphate group from 5-phosphoribose 1-diphosphate to orotate, leading to the formation of orotidine monophosphate (OMP). The sequence is that of Orotate phosphoribosyltransferase from Pelotomaculum thermopropionicum (strain DSM 13744 / JCM 10971 / SI).